Consider the following 151-residue polypeptide: MSDWESHTVIGQKARAGGSGPRANVARTQGQINAARRQGLVLSVDKKYGTANTKGDAEGQRLTKVDRETDIVKPKKLDANVGKTIARVRTEKKMSQKDLATKINEKPTVINDYEAGRAIPNQQVLGKMERALGVKLRGKAIGEPLGGPKKK.

A disordered region spans residues 1-31; the sequence is MSDWESHTVIGQKARAGGSGPRANVARTQGQ. The HTH cro/C1-type domain maps to 85-139; sequence IARVRTEKKMSQKDLATKINEKPTVINDYEAGRAIPNQQVLGKMERALGVKLRGK. The H-T-H motif DNA-binding region spans 96–115; it reads QKDLATKINEKPTVINDYEA.

The protein belongs to the MBF1 family.

Its function is as follows. Transcriptional coactivator that stimulates GCN4-dependent transcriptional activity by bridging the DNA-binding region of GCN4 and TBP (SPT15), thereby recruiting TBP to GCN4-bound promoters. Involved in induction of the ribosome quality control (RQC) pathway; a pathway that degrades nascent peptide chains during problematic translation. Required to prevent stalled ribosomes from frameshifting. The protein is Multiprotein-bridging factor 1 (MBF1) of Candida glabrata (strain ATCC 2001 / BCRC 20586 / JCM 3761 / NBRC 0622 / NRRL Y-65 / CBS 138) (Yeast).